Reading from the N-terminus, the 139-residue chain is Nucleoside diphosphate kinase (139 aa).

ATP contacts are provided by lysine 10, phenylalanine 58, arginine 86, threonine 92, arginine 103, and asparagine 113. The Pros-phosphohistidine intermediate role is filled by histidine 116.

Belongs to the NDK family. In terms of assembly, homotetramer. The cofactor is Mg(2+).

The protein localises to the cytoplasm. It catalyses the reaction a 2'-deoxyribonucleoside 5'-diphosphate + ATP = a 2'-deoxyribonucleoside 5'-triphosphate + ADP. It carries out the reaction a ribonucleoside 5'-diphosphate + ATP = a ribonucleoside 5'-triphosphate + ADP. Functionally, major role in the synthesis of nucleoside triphosphates other than ATP. The ATP gamma phosphate is transferred to the NDP beta phosphate via a ping-pong mechanism, using a phosphorylated active-site intermediate. The chain is Nucleoside diphosphate kinase from Caulobacter vibrioides (strain ATCC 19089 / CIP 103742 / CB 15) (Caulobacter crescentus).